A 275-amino-acid chain; its full sequence is LexA repressor (275 aa).

Residues 1-50 (MKRSTPRPARSQAALTTSSEESPDRVERGGDGVATVTDFPDGPPDETGLT) are disordered. The H-T-H motif DNA-binding region spans 73–93 (MREIGEAVGLTSTSSVAHQLM). The interval 114-151 (RSAESAVPDASAGHSPAADRAPSARRPPRGPSPIDSNP) is disordered. Catalysis depends on for autocatalytic cleavage activity residues serine 199 and lysine 236.

Belongs to the peptidase S24 family. As to quaternary structure, homodimer.

The enzyme catalyses Hydrolysis of Ala-|-Gly bond in repressor LexA.. Represses a number of genes involved in the response to DNA damage (SOS response), including recA and lexA. In the presence of single-stranded DNA, RecA interacts with LexA causing an autocatalytic cleavage which disrupts the DNA-binding part of LexA, leading to derepression of the SOS regulon and eventually DNA repair. In Acidothermus cellulolyticus (strain ATCC 43068 / DSM 8971 / 11B), this protein is LexA repressor.